Here is an 853-residue protein sequence, read N- to C-terminus: Thrombospondin type-1 domain-containing protein 1 (853 aa).

Residues 1-24 (MKPMLKDFSNLLLVVLCDYVLGEA) form the signal peptide. Residues 25–414 (EYLLLREPGH…QPQGPVKSNN (390 aa)) lie on the Extracellular side of the membrane. N-linked (GlcNAc...) asparagine glycosylation is found at Asn39, Asn53, Asn58, Asn69, Asn80, Asn135, and Asn304. The TSP type-1 domain occupies 341–394 (IETWGLWQPWSQCSATCGDGVRERRRVCLTSFPSRPGCPGMSLEASLCSLEECA). 3 disulfides stabilise this stretch: Cys353-Cys388, Cys357-Cys393, and Cys368-Cys378. A helical membrane pass occupies residues 415–435 (IVTVTGISLCLFIIIATVLIT). Topologically, residues 436-853 (LWRRFGRPAK…STLSVEKLVI (418 aa)) are cytoplasmic. 4 disordered regions span residues 445–518 (KCST…ESFQ), 624–650 (TLIR…RNAH), 668–702 (ERSM…QSRG), and 714–800 (QEAS…RKDK). Position 464 is a phosphoserine (Ser464). Polar residues predominate over residues 671–686 (MSTLTPRQAPAYSTRT). The segment covering 687–697 (RTCEQAEDRFR) has biased composition (basic and acidic residues). The span at 767–795 (SHKSVSRKQSSPTSPKDSYQRVSPLSPSQ) shows a compositional bias: polar residues.

As to quaternary structure, part of a complex composed of THSD1, PTK2/FAK1, TLN1 and VCL. Interacts with TLN1.

It localises to the endosome membrane. Its subcellular location is the cell junction. The protein localises to the focal adhesion. Its function is as follows. Is a positive regulator of nascent focal adhesion assembly, involved in the modulation of endothelial cell attachment to the extracellular matrix. The polypeptide is Thrombospondin type-1 domain-containing protein 1 (THSD1) (Pongo abelii (Sumatran orangutan)).